Here is a 549-residue protein sequence, read N- to C-terminus: Oxygen-dependent choline dehydrogenase (549 aa).

4-33 contacts FAD; it reads DFVIIGSGSAGSAMAYRLSEDGRYSVIVIE. Catalysis depends on histidine 465, which acts as the Proton acceptor.

The protein belongs to the GMC oxidoreductase family. The cofactor is FAD.

The enzyme catalyses choline + A = betaine aldehyde + AH2. It catalyses the reaction betaine aldehyde + NAD(+) + H2O = glycine betaine + NADH + 2 H(+). It participates in amine and polyamine biosynthesis; betaine biosynthesis via choline pathway; betaine aldehyde from choline (cytochrome c reductase route): step 1/1. Involved in the biosynthesis of the osmoprotectant glycine betaine. Catalyzes the oxidation of choline to betaine aldehyde and betaine aldehyde to glycine betaine at the same rate. The polypeptide is Oxygen-dependent choline dehydrogenase (Brucella canis (strain ATCC 23365 / NCTC 10854 / RM-666)).